Consider the following 543-residue polypeptide: Sensor histidine kinase DcuS (543 aa).

The Cytoplasmic segment spans residues methionine 1–threonine 20. The helical transmembrane segment at valine 21–phenylalanine 41 threads the bilayer. Residues serine 42–tryptophan 181 lie on the Periplasmic side of the membrane. Residues arginine 107–histidine 110, lysine 121, glycine 140–leucine 142, and arginine 147 each bind (R)-malate. Residues serine 182–valine 202 form a helical membrane-spanning segment. Residues asparagine 203–arginine 543 lie on the Cytoplasmic side of the membrane. Positions leucine 212–aspartate 323 constitute a PAS domain. In terms of domain architecture, Histidine kinase spans glutamate 346–glycine 538. A Phosphohistidine; by autocatalysis modification is found at histidine 349.

Homodimer. In terms of processing, autophosphorylated. The phosphoryl group is rapidly transferred to DcuR.

The protein localises to the cell inner membrane. The catalysed reaction is ATP + protein L-histidine = ADP + protein N-phospho-L-histidine.. Functionally, member of the two-component regulatory system DcuR/DcuS. Involved in the C4-dicarboxylate-stimulated regulation of the genes encoding the anaerobic fumarate respiratory system (frdABCD; nuoAN; dcuB; sdhCDAB; etc.). Weakly regulates the aerobic C4-dicarboxylate transporter dctA. Activates DcuR by phosphorylation. The polypeptide is Sensor histidine kinase DcuS (dcuS) (Escherichia coli O6:H1 (strain CFT073 / ATCC 700928 / UPEC)).